The following is a 139-amino-acid chain: Trafficking protein particle complex subunit 2-like protein (139 aa).

It belongs to the TRAPP small subunits family. Sedlin subfamily.

It localises to the cytoplasm. Its subcellular location is the perinuclear region. The protein resides in the endoplasmic reticulum. It is found in the golgi apparatus. May play a role in vesicular transport from endoplasmic reticulum to Golgi. This chain is Trafficking protein particle complex subunit 2-like protein (TRAPPC2L), found in Taeniopygia guttata (Zebra finch).